The primary structure comprises 436 residues: Adenosylhomocysteinase (436 aa).

Positions 62, 136, and 161 each coordinate substrate. 162-164 (TTT) provides a ligand contact to NAD(+). K191 and D195 together coordinate substrate. NAD(+)-binding positions include N196, 225–230 (GFGDVG), E248, N283, 304–306 (IGH), and N352.

Belongs to the adenosylhomocysteinase family. It depends on NAD(+) as a cofactor.

It is found in the cytoplasm. The enzyme catalyses S-adenosyl-L-homocysteine + H2O = L-homocysteine + adenosine. It functions in the pathway amino-acid biosynthesis; L-homocysteine biosynthesis; L-homocysteine from S-adenosyl-L-homocysteine: step 1/1. Functionally, may play a key role in the regulation of the intracellular concentration of adenosylhomocysteine. In Leptospira borgpetersenii serovar Hardjo-bovis (strain JB197), this protein is Adenosylhomocysteinase.